A 26-amino-acid polypeptide reads, in one-letter code: M-poneritoxin-Ng1d (26 aa).

In terms of tissue distribution, expressed by the venom gland.

The protein resides in the secreted. It is found in the target cell membrane. Has a broad spectrum of activity against both Gram-positive and Gram-negative bacteria and S.cerevisiae. Has insecticidal and hemolytic activities. May act by disrupting the integrity of the bacterial cell membrane. In Neoponera goeldii (Ponerine ant), this protein is M-poneritoxin-Ng1d.